The following is a 424-amino-acid chain: MYQSPLIQDLHDRGLIAQITDAAALDKLLTEESVTLYCGFDPTADSLHLGHLVPVLILKRFQEAGHKPIALVGGATGMIGDPSFKATERKLNTPDVIASWVGKIRGQVEPFLKFDGANAAIMANNYDWFGGMNCLEFMRDIGKHFSVNAMIKKESVQQRLTREDQGISYTEFSYSLLQGYDFAELNKRYGCVLQIGGSDQWGNIVAGTDLTRRLHQKHVFGLTLPLITKADGTKFGKTESGAIWLDPKKTSPYAFYQFWLNTSDADVYKFMNFFTFLPVARIAEIEAADKASGTKPEAQRILAEEATRLVHGEVALMAARRITECLFSGQLADLTENDLEQLAQDGMPGVQLEKSNTGLIDALVASGLAKSKSEARTFIQSGSVAINGNKAEALDHAIGGDELLYGRFTILRRGKKNYGLISWQ.

An L-tyrosine-binding site is contributed by Tyr-37. The 'HIGH' region motif lies at 42-51 (PTADSLHLGH). L-tyrosine contacts are provided by Tyr-174 and Gln-178. The 'KMSKS' region signature appears at 234–238 (KFGKT). An ATP-binding site is contributed by Lys-237. One can recognise an S4 RNA-binding domain in the interval 357–414 (TGLIDALVASGLAKSKSEARTFIQSGSVAINGNKAEALDHAIGGDELLYGRFTILRRG).

This sequence belongs to the class-I aminoacyl-tRNA synthetase family. TyrS type 1 subfamily. In terms of assembly, homodimer.

The protein resides in the cytoplasm. The enzyme catalyses tRNA(Tyr) + L-tyrosine + ATP = L-tyrosyl-tRNA(Tyr) + AMP + diphosphate + H(+). Catalyzes the attachment of tyrosine to tRNA(Tyr) in a two-step reaction: tyrosine is first activated by ATP to form Tyr-AMP and then transferred to the acceptor end of tRNA(Tyr). This chain is Tyrosine--tRNA ligase, found in Dechloromonas aromatica (strain RCB).